The primary structure comprises 1843 residues: Cilia- and flagella-associated protein 44 (1843 aa).

The disordered stretch occupies residues 1–86 (MKEPDDQDTS…PPVEVKEEPE (86 aa)). The span at 29 to 39 (LKSSQDTTADS) shows a compositional bias: polar residues. The span at 41 to 58 (TDGEESYLGDDLDLDDMD) shows a compositional bias: acidic residues. WD repeat units follow at residues 214-255 (GAEK…PILR), 258-297 (AFSQDVFKVTFNPDNDEQLTTSGSGHIKFWEMAFTFTGLK), 308-346 (TSTSDIEGYAELPDGKVLSGSEWGNLLLWEGSLIKVELC), 353-390 (CHSGSINQIMLDEGEVITAGSDGSVRIWDFETIDTADV), 456-495 (FHSGPIAALAVSPLTYLMATTAMDCSVRVYDFSSKNPLVH), 497-541 (KFKQ…GLTV), and 561-600 (PHTDEVTALAYERDGDILATGSEDKTVFFFDVEKEYKPIG). Positions 701–726 (REAFGEEEIPEEETSEEGEEEEPPLP) are disordered. Over residues 705–724 (GEEEIPEEETSEEGEEEEPP) the composition is skewed to acidic residues. WD repeat units follow at residues 790-829 (TEDNPIRNITFSNDQTMMFCGMTNGAIRVYVLSENDPFLV) and 842-881 (NNYGSIKSITSSFDDQYLLTAGEDGNIFVFDIFSEFIVPK). Disordered regions lie at residues 1040-1086 (YSKL…SVLE), 1266-1291 (QRKQKKRQDKSSSKQSGTGSGGSAGG), and 1488-1524 (KEVEGDADEDEESEESSEEESSLESDEDASGSEDDVF). Residues 1047 to 1071 (SQSERRQSKMERLEKEGPGKKESQR) show a composition bias toward basic and acidic residues. Serine 1069 bears the Phosphoserine mark. A compositionally biased stretch (polar residues) spans 1072–1081 (DTGGSISLQE). The segment covering 1492–1524 (GDADEDEESEESSEEESSLESDEDASGSEDDVF) has biased composition (acidic residues). Coiled coils occupy residues 1548 to 1603 (RLDI…RLNE) and 1631 to 1665 (LVFSNHSLDRLQERIVQLQEENAKQQKLNKECRER). One copy of the WD 10 repeat lies at 1699-1744 (IDLEALQTLSVNTTLEELKIKKLRKELSNAKELRMWEEKIAQVRWD).

This sequence belongs to the CFAP44 family. As to expression, expressed in testis.

The protein resides in the cell projection. Its subcellular location is the cilium. The protein localises to the flagellum. It localises to the cytoplasm. It is found in the cytoskeleton. The protein resides in the flagellum axoneme. Flagellar protein involved in sperm flagellum axoneme organization and function. The chain is Cilia- and flagella-associated protein 44 from Mus musculus (Mouse).